The following is a 72-amino-acid chain: Small proline-rich protein 2E (72 aa).

The segment covering Met-1–Pro-11 has biased composition (low complexity). A disordered region spans residues Met-1–Thr-20. A run of 3 repeats spans residues Pro-21–Pro-29, Pro-30–Pro-38, and Pro-39–Pro-47. Positions Pro-21–Pro-47 are 3 X 9 AA tandem repeats of P-K-C-P-[EQ]-P-C-P-P. Residues Pro-42–Lys-72 are disordered. The span at Pro-56–Lys-72 shows a compositional bias: pro residues.

This sequence belongs to the cornifin (SPRR) family.

Its subcellular location is the cytoplasm. Cross-linked envelope protein of keratinocytes. It is a keratinocyte protein that first appears in the cell cytosol, but ultimately becomes cross-linked to membrane proteins by transglutaminase. All that results in the formation of an insoluble envelope beneath the plasma membrane. This is Small proline-rich protein 2E (SPRR2E) from Homo sapiens (Human).